The primary structure comprises 201 residues: Thioredoxin reductase-like selenoprotein T (201 aa).

A signal peptide spans 1–26; it reads MARSSGPLCLLLLGGLVAGILSGASA. A cross-link (cysteinyl-selenocysteine (Cys-Sec)) is located at residues 51 to 54; it reads CVSU. U54 is a non-standard amino acid (selenocysteine). The helical transmembrane segment at 96 to 116 threads the bilayer; it reads VFKLVLIGLIIAGKDPFAFFG.

It belongs to the SelWTH family. Selenoprotein T subfamily. May contain a selenide-sulfide bond between Cys-51 and Sec-54. This bond is speculated to serve as redox-active pair.

It is found in the endoplasmic reticulum membrane. It carries out the reaction [thioredoxin]-dithiol + NADP(+) = [thioredoxin]-disulfide + NADPH + H(+). Functionally, selenoprotein with thioredoxin reductase-like oxidoreductase activity. The protein is Thioredoxin reductase-like selenoprotein T (selenot) of Xenopus tropicalis (Western clawed frog).